Reading from the N-terminus, the 573-residue chain is Potassium-transporting ATPase potassium-binding subunit (573 aa).

10 helical membrane passes run 3 to 23 (AEGLLQILLYLGLLAAVTPLL), 65 to 85 (GYTLALLSFNLLGLLLLYALL), 136 to 156 (GLTVQNFVSAATGIAVAVALI), 179 to 199 (LYVLLPLAFLGALVLVWQGVP), 254 to 274 (LTNLLESFYLLMIAAALIYSF), 286 to 306 (ALWTAVFILFVAGLAVTWWAE), 383 to 403 (AGLYGLLVFVILAVFIAGLMV), 423 to 443 (VIAVLVFPLGILGGAALTTVV), 489 to 509 (GLGLAMLLGRFAVIVPTLAIA), and 531 to 551 (LFITLLIATILIVGGLTFFPA).

The protein belongs to the KdpA family. In terms of assembly, the system is composed of three essential subunits: KdpA, KdpB and KdpC.

Its subcellular location is the cell inner membrane. Part of the high-affinity ATP-driven potassium transport (or Kdp) system, which catalyzes the hydrolysis of ATP coupled with the electrogenic transport of potassium into the cytoplasm. This subunit binds the periplasmic potassium ions and delivers the ions to the membrane domain of KdpB through an intramembrane tunnel. The protein is Potassium-transporting ATPase potassium-binding subunit of Rhodospirillum centenum (strain ATCC 51521 / SW).